Consider the following 299-residue polypeptide: N-acetylneuraminate lyase (299 aa).

The aceneuramate site is built by Ser45 and Ser46. Residue Tyr134 is the Proton donor of the active site. The Schiff-base intermediate with substrate role is filled by Lys161. Residues Thr163, Gly185, Asp187, and Glu188 each coordinate aceneuramate.

This sequence belongs to the DapA family. NanA subfamily. In terms of assembly, homotetramer.

Its subcellular location is the cytoplasm. It catalyses the reaction aceneuramate = aldehydo-N-acetyl-D-mannosamine + pyruvate. The protein operates within amino-sugar metabolism; N-acetylneuraminate degradation; D-fructose 6-phosphate from N-acetylneuraminate: step 1/5. In terms of biological role, catalyzes the reversible aldol cleavage of N-acetylneuraminic acid (sialic acid; Neu5Ac) to form pyruvate and N-acetylmannosamine (ManNAc) via a Schiff base intermediate. The sequence is that of N-acetylneuraminate lyase from Rhizobium meliloti (strain 1021) (Ensifer meliloti).